The following is a 203-amino-acid chain: Endo-type membrane-bound lytic murein transglycosylase A (203 aa).

The N-terminal stretch at 1 to 15 (MKLRWLLILVVFLAG) is a signal peptide. The N-palmitoyl cysteine moiety is linked to residue Cys-16. Cys-16 is lipidated: S-diacylglycerol cysteine.

This sequence belongs to the transglycosylase Slt family.

Its subcellular location is the cell outer membrane. It carries out the reaction Endolytic cleavage of the (1-&gt;4)-beta-glycosidic linkage between N-acetylmuramic acid (MurNAc) and N-acetylglucosamine (GlcNAc) residues in peptidoglycan with concomitant formation of a 1,6-anhydrobond in the MurNAc residue.. Functionally, murein-degrading enzyme. May play a role in recycling of muropeptides during cell elongation and/or cell division. Preferentially cleaves at a distance of more than two disaccharide units from the ends of the glycan chain. The sequence is that of Endo-type membrane-bound lytic murein transglycosylase A from Klebsiella pneumoniae (strain 342).